Reading from the N-terminus, the 159-residue chain is Ribosomal RNA large subunit methyltransferase H (159 aa).

S-adenosyl-L-methionine-binding positions include leucine 76, glycine 108, and 127–132 (FSKMTL).

The protein belongs to the RNA methyltransferase RlmH family. As to quaternary structure, homodimer.

It is found in the cytoplasm. The catalysed reaction is pseudouridine(1915) in 23S rRNA + S-adenosyl-L-methionine = N(3)-methylpseudouridine(1915) in 23S rRNA + S-adenosyl-L-homocysteine + H(+). Specifically methylates the pseudouridine at position 1915 (m3Psi1915) in 23S rRNA. The protein is Ribosomal RNA large subunit methyltransferase H of Bacillus cereus (strain ATCC 14579 / DSM 31 / CCUG 7414 / JCM 2152 / NBRC 15305 / NCIMB 9373 / NCTC 2599 / NRRL B-3711).